A 101-amino-acid chain; its full sequence is NAD(P)H-quinone oxidoreductase subunit 4L, chloroplastic (101 aa).

3 consecutive transmembrane segments (helical) span residues 2-22, 32-52, and 61-81; these read MLEHVLVLSAYLFSIGIYGLI, MCLELILNAVNMNLVTFSDLF, and IFSIFVIAIAAAEAAIGPAIV.

This sequence belongs to the complex I subunit 4L family. NDH is composed of at least 16 different subunits, 5 of which are encoded in the nucleus.

It localises to the plastid. Its subcellular location is the chloroplast thylakoid membrane. It catalyses the reaction a plastoquinone + NADH + (n+1) H(+)(in) = a plastoquinol + NAD(+) + n H(+)(out). The catalysed reaction is a plastoquinone + NADPH + (n+1) H(+)(in) = a plastoquinol + NADP(+) + n H(+)(out). Its function is as follows. NDH shuttles electrons from NAD(P)H:plastoquinone, via FMN and iron-sulfur (Fe-S) centers, to quinones in the photosynthetic chain and possibly in a chloroplast respiratory chain. The immediate electron acceptor for the enzyme in this species is believed to be plastoquinone. Couples the redox reaction to proton translocation, and thus conserves the redox energy in a proton gradient. The polypeptide is NAD(P)H-quinone oxidoreductase subunit 4L, chloroplastic (Nymphaea alba (White water-lily)).